The chain runs to 404 residues: Deoxyguanosinetriphosphate triphosphohydrolase-like protein (404 aa).

The interval 1-32 is disordered; the sequence is MAVGMAAPHATYASDPARSRGRLFDEPPSKTR. The span at 22–32 shows a compositional bias: basic and acidic residues; the sequence is RLFDEPPSKTR. The region spanning 69-217 is the HD domain; sequence RLTHTLEVAQ…AAIADDIAYD (149 aa).

Belongs to the dGTPase family. Type 2 subfamily.

The protein is Deoxyguanosinetriphosphate triphosphohydrolase-like protein of Nitrobacter hamburgensis (strain DSM 10229 / NCIMB 13809 / X14).